The primary structure comprises 298 residues: MAKRIFLFILTNILVLTTIGIVLSVLSSVTGVGTYFTADGGIDPMALLVFSLVVGFVGSFTSLAISRWMAKTMMGVRVLNPKKHSLSYEEQQLVDRVHRLSRSAGLTKMPEVGIYRSPEVNAFATGPSKRRSLVAVSSGLLEQMDDAAVEGVLAHEVAHITNGDMVTMTLLQGIVNTFVVFLSRIAAWIASRFVKEDLAPIVHFIAMIIFQIVFSILGSLVVFAYSRHREFHADRGGADLAGKDKMIHALRTLKSYSSRILEDDQTAVQTLKINGKKRSSLFSTHPDLDERIRRLEAK.

2 consecutive transmembrane segments (helical) span residues 5–25 (IFLF…VLSV) and 45–65 (MALL…SLAI). Residue H155 coordinates Zn(2+). The active site involves E156. Residue H159 participates in Zn(2+) binding. The next 2 membrane-spanning stretches (helical) occupy residues 170 to 190 (LLQG…AWIA) and 204 to 224 (FIAM…VVFA). E230 provides a ligand contact to Zn(2+).

The protein belongs to the peptidase M48B family. Zn(2+) is required as a cofactor.

It is found in the cell membrane. The protein is Protease HtpX homolog of Bacillus subtilis (strain 168).